The sequence spans 338 residues: Ketoreductase azaE (338 aa).

Positions 41 and 166 each coordinate NADP(+).

It belongs to the NAD(P)-dependent epimerase/dehydratase family. Dihydroflavonol-4-reductase subfamily.

It functions in the pathway secondary metabolite biosynthesis. Functionally, ketoreductase; part of the gene cluster that mediates the biosynthesis of azaphilones, a class of fungal metabolites characterized by a highly oxygenated pyrano-quinone bicyclic core and exhibiting a broad range of bioactivities. In the first step, the non-reducing polyketide synthase azaA forms the hexaketide precursor from successive condensations of five malonyl-CoA units, presumably with a simple acetyl-CoA starter unit. The reactive polyketide chain then undergoes a PT-mediated C2-C7 cyclization to afford the aromatic ring and is eventually released as an aldehyde through the R-domain. The putative ketoreductase azaE is proposed to catalyze the reduction of the terminal ketone resulting in the early culture product FK17-P2a. The monooxygenase azaH was demonstrated to be the only enzyme required to convert FK17-P2a to azanigerone E. AzaH first hydroxylates the benzaldehyde intermediate FK17-P2a at C4, which triggers the formation of the pyran-ring to afford azanigerone E. In parallel, the 2,4-dimethylhexanoyl chain is synthesized by the HR-PKS azaB and is proposed to be transferred to the C4-hydroxyl of azanigerone E by the acyltransferase azaD directly from the ACP domain of azaB. Alternatively, the 2,4-dimethyl-hexanoyl chain may be offloaded from the HR-PKS as a carboxylic acid and converted to an acyl-CoA by azaF. The resulting acyl-CoA molecule could then be taken up as a substrate by AzaD to form azanigerone B. To yield the carboxylic acid substituent in azanigerone A, the hydroxypropyl side chain of azanigerone B would need to undergo a C-C oxidative cleavage catalyzed by cytochrome P450 AzaI. AzaI is proposed to act on a vicinal diol that leads to a C-C bond scission either through an alkoxyradical intermediate or a peroxy complex. In the biosynthesis of azanigerone A, azanigerone B first undergoes hydroxylation at C10, possibly catalyzed by one of the two FAD-dependent monooxygenases encoded in the cluster, azaG or azaL, resulting in the vicinal diol azanigerone C. Oxidative cleavage of azanigerone C by azaI would yield the corresponding aldehyde derivative of azanigerone A. Finally, the dehydrogenase azaJ is proposed to convert the aldehyde functional group into the carboxylic acid, completing the conversion from azanigerone B to azanigerone A. Alternatively, the oxidation of aldehyde to carboxylic acid may be catalyzed by the same P450 enzyme azaI via consecutive oxidation or by endogenous alcohol dehydrogenase. The chain is Ketoreductase azaE from Aspergillus niger (strain ATCC 1015 / CBS 113.46 / FGSC A1144 / LSHB Ac4 / NCTC 3858a / NRRL 328 / USDA 3528.7).